The sequence spans 314 residues: Methionyl-tRNA formyltransferase (314 aa).

A (6S)-5,6,7,8-tetrahydrofolate-binding site is contributed by 110–113; the sequence is SLLP.

This sequence belongs to the Fmt family.

It carries out the reaction L-methionyl-tRNA(fMet) + (6R)-10-formyltetrahydrofolate = N-formyl-L-methionyl-tRNA(fMet) + (6S)-5,6,7,8-tetrahydrofolate + H(+). Attaches a formyl group to the free amino group of methionyl-tRNA(fMet). The formyl group appears to play a dual role in the initiator identity of N-formylmethionyl-tRNA by promoting its recognition by IF2 and preventing the misappropriation of this tRNA by the elongation apparatus. The sequence is that of Methionyl-tRNA formyltransferase from Dichelobacter nodosus (strain VCS1703A).